We begin with the raw amino-acid sequence, 325 residues long: Heat-inducible transcription repressor HrcA (325 aa).

Belongs to the HrcA family.

Negative regulator of class I heat shock genes (grpE-dnaK-dnaJ and groELS operons). Prevents heat-shock induction of these operons. The protein is Heat-inducible transcription repressor HrcA of Staphylococcus aureus (strain USA300).